An 800-amino-acid chain; its full sequence is MGPASKRNKKKRPSFRKLLKTSNLKLENKLKNRQFKQQSSAKKQRKEQRKLHKAISDVSHQTLKPLERYKKRPEDEEEEEEFLESLPTDMMDEDDLEHIRAIAQKASFLTRDLSSCAPVHAKKHKSEQALENYEKMPRKMQQEEEKELIHLLPIKDKSGLIPQSMEKPVLPQAEEEEEEPNQEVYLQKEEEPESAPLLTPQEQFEQRAQKLMEKKLRIAALSSAILADPHVNIKKLKELRAMLMETDPCVAVTVRKLVMVSLMEVFKDIVPAYRIRPLTEEEKAAKVKKETLQLREFEEGLVSQYKFYLEELEQTVKDWKQKKEKRSQAVSLQSYKGLAEVAVRCICELLVALPHFNFHNNIIVMLVPLMNDSDKKVSEMCCEAVKKLLKQDKVGQASLAMVKVISGMVKSRNYRIKPVVLNCLLCLRIKEVDMKKDTEDTAPKKKFMSFKEKRKNLSRMQRKWKKAEEKLQKELLEAEATESKEKKIKLHTETLNVVFLIYFRILKKAQKSVLLSSVLEGLAKFAHLINLEFFDDLLAVLYNLITSGDLTYRESLHCILTSFHILSGQGDVLNIDPLKFYSHLYRTLLTLHAGGVNEDTVIVLQCLDVMLSKRRKQVTLQRAQAFLKRLNTVALHLLPDSCVGILAANRMLMQTFPKCDILLDNETQGSGVYLPELDVPEYCNPQNTALWELHLLKSHYHPVVRKFAAHLMKGAPSEGSGALGVELSRRSPLQLFEDYSVKDMSFNPPVAGPPSKKKEYFTIGHAFLHSELSRQIDAALQEEPEQMSLDFTSPHTQQEP.

Composition is skewed to basic residues over residues Met-1–Leu-19 and Lys-42–Lys-53. Disordered regions lie at residues Met-1 to Met-91 and Lys-167 to Leu-197. A compositionally biased stretch (basic and acidic residues) spans Pro-65–Glu-74. Residues Ser-449–Leu-490 adopt a coiled-coil conformation. Residues Leu-780–Pro-800 form a disordered region. Polar residues predominate over residues Leu-789 to Pro-800.

This sequence belongs to the CBF/MAK21 family.

The protein resides in the nucleus. Its subcellular location is the nucleolus. In Danio rerio (Zebrafish), this protein is Nucleolar complex protein 3 homolog (noc3l).